A 320-amino-acid chain; its full sequence is Transcription factor bHLH34 (320 aa).

A bHLH domain is found at 162–213 (SKPGTKACREKLRREKLNDKFMDLSSVLEPGRTPKTDKSAILDDAIRVVNQL). Residues 299–320 (WSPLPPADRDTSRDLKNLPPVA) form a disordered region. Residues 305 to 314 (ADRDTSRDLK) are compositionally biased toward basic and acidic residues.

In terms of assembly, homodimer. Expressed constitutively in roots, leaves, stems, and flowers.

The protein resides in the nucleus. The chain is Transcription factor bHLH34 (BHLH34) from Arabidopsis thaliana (Mouse-ear cress).